Reading from the N-terminus, the 217-residue chain is Probable D-methionine transport system permease protein MetI (217 aa).

An ABC transmembrane type-1 domain is found at 13-207; the sequence is TLETLYMGFI…LIVMLSQKLG (195 aa). The next 5 membrane-spanning stretches (helical) occupy residues 20-40, 58-78, 81-101, 143-163, and 184-204; these read GFIA…LAFL, VIIN…LLPF, LVVG…VSAI, IPIL…YSAM, and NMIY…MLSQ.

Belongs to the binding-protein-dependent transport system permease family. CysTW subfamily.

It localises to the cell inner membrane. Functionally, part of the binding-protein-dependent transport system for D-methionine. Probably responsible for the translocation of the substrate across the membrane. In Pasteurella multocida (strain Pm70), this protein is Probable D-methionine transport system permease protein MetI (metI).